The sequence spans 336 residues: MGGGLVLPTRDPPKEQDTSETATNIPKLLKSIPGVKLGQQIRIGYKPGPETAKAFPEFDIKEVSNGLYELSRKSYLGDTKTCCINPSLSYYWEDSKNKIFDEYATGRSLKTCDPLTKTISGSTLCDNILTSLCLDEKSGVDRTMCNEWMGYALNRPDLSIPKSINDRYTKLCSKGANNIVCEDWLHHLRIIGGKENDEVIDNVLMQQTPEFKEKYMKCSFPSHNTVFLADRVIEPRECWDQECITSNVHFLLSKNYHNLTLCHIYRCNISINNLLIDGKSSVKISCHDENISNKDKPKARNKAKFIDDILGSSFNINFGFFFVIFIMIALILIVLL.

A disordered region spans residues 1-22; that stretch reads MGGGLVLPTRDPPKEQDTSETA.

The protein belongs to the poxviruses A16/G9/J5 family.

This is Protein FPV127 from Vertebrata (FPV).